Consider the following 276-residue polypeptide: Undecaprenyl-diphosphatase (276 aa).

Transmembrane regions (helical) follow at residues 42–62, 88–108, 116–136, 149–169, 187–207, 222–242, and 253–273; these read AVTA…IVYF, ALLG…GYLG, LRSL…IVYA, MRLP…VPGV, VAAT…AGIF, SLVV…AWLL, and FVWY…TGLV.

The protein belongs to the UppP family.

The protein resides in the cell membrane. The catalysed reaction is di-trans,octa-cis-undecaprenyl diphosphate + H2O = di-trans,octa-cis-undecaprenyl phosphate + phosphate + H(+). Catalyzes the dephosphorylation of undecaprenyl diphosphate (UPP). Confers resistance to bacitracin. In Acidothermus cellulolyticus (strain ATCC 43068 / DSM 8971 / 11B), this protein is Undecaprenyl-diphosphatase.